The sequence spans 216 residues: Fibroblast growth factor 19 (216 aa).

The signal sequence occupies residues 1-24 (MRSGCVVVHVWILAGLWLAVAGRP). 2 cysteine pairs are disulfide-bonded: cysteine 58–cysteine 70 and cysteine 102–cysteine 120.

It belongs to the heparin-binding growth factors family. In terms of assembly, interacts with FGFR1, FGFR2, FGFR3 and FGFR4. Affinity between fibroblast growth factors (FGFs) and their receptors is increased by KL, KLB and heparan sulfate glycosaminoglycans that function as coreceptors. Interacts with KL; this interaction is direct. Interacts with KLB; this interaction is direct. Interacts with FGFR4 in the presence of heparin, KL or KLB. Interacts with MALRD1. In terms of tissue distribution, expressed in fetal brain, cartilage, retina, and adult gall bladder.

Its subcellular location is the secreted. Functionally, involved in the suppression of bile acid biosynthesis through down-regulation of CYP7A1 expression, following positive regulation of the JNK and ERK1/2 cascades. Stimulates glucose uptake in adipocytes. Activity requires the presence of KLB and FGFR4. The chain is Fibroblast growth factor 19 (FGF19) from Homo sapiens (Human).